Reading from the N-terminus, the 314-residue chain is Small glutamine-rich tetratricopeptide repeat-containing protein alpha (314 aa).

The interval 65–99 is disordered; the sequence is ATASKEMPQDPRGPDRTPPSEEDSAEAERLKTEGN. Positions 71 to 83 are enriched in basic and acidic residues; that stretch reads MPQDPRGPDRTPP. Thr-81 is subject to Phosphothreonine. Residue Ser-84 is modified to Phosphoserine. The span at 90–99 shows a compositional bias: basic and acidic residues; it reads EAERLKTEGN. 3 TPR repeats span residues 91–124, 125–158, and 159–192; these read AERLKTEGNEQMKLENFEAAVHLYGKAIELNPAN, AVYFCNRAAAYSKLGNYVGAVQDCERAIGIDPGY, and SKAYGRMGLALSSLNKHAEAVAYYKKALELDPDN. At Lys-137 the chain carries N6-acetyllysine. Residues 249–268 are disordered; the sequence is GMISGGHNPLGTPGSSPQHS. At Ser-302 the chain carries Phosphoserine. Thr-304 bears the Phosphothreonine mark. Ser-306 is modified (phosphoserine).

It belongs to the SGT family. As to quaternary structure, homodimer. Homooligomer. Interacts with DNAJC5 and DNAJC5B. Interacts (via TPR repeats) with HSP90AA1. Interacts (via Gln-rich region) with SLC2A1. Interacts with HSP90AB1. Interacts (via TPR repeats) with HSPA8/Hsc70; the interaction is direct. Interacts with BAG6 (via ubiquitin-like domain); interaction prevents interaction between BAG6 and RNF126. Forms a multiprotein complex, at least composed of DNAJB12, DNAJB14, HSPA8/Hsc70 and SGTA; interaction with DNAJB14 and HSPA8/Hsc70 is direct. In terms of assembly, (Microbial infection) Interacts with NS1 from parvovirus H-1. Ubiquitously expressed.

The protein resides in the cytoplasm. It localises to the nucleus. Functionally, co-chaperone that binds misfolded and hydrophobic patches-containing client proteins in the cytosol. Mediates their targeting to the endoplasmic reticulum but also regulates their sorting to the proteasome when targeting fails. Functions in tail-anchored/type II transmembrane proteins membrane insertion constituting with ASNA1 and the BAG6 complex a targeting module. Functions upstream of the BAG6 complex and ASNA1, binding more rapidly the transmembrane domain of newly synthesized proteins. It is also involved in the regulation of the endoplasmic reticulum-associated misfolded protein catabolic process via its interaction with BAG6: collaborates with the BAG6 complex to maintain hydrophobic substrates in non-ubiquitinated states. Competes with RNF126 for interaction with BAG6, preventing the ubiquitination of client proteins associated with the BAG6 complex. Binds directly to HSC70 and HSP70 and regulates their ATPase activity. This Rattus norvegicus (Rat) protein is Small glutamine-rich tetratricopeptide repeat-containing protein alpha (Sgta).